The primary structure comprises 309 residues: Ribonuclease Z (309 aa).

Zn(2+) is bound by residues H63, H65, D67, H68, H145, D216, and H274. D67 (proton acceptor) is an active-site residue.

It belongs to the RNase Z family. In terms of assembly, homodimer. It depends on Zn(2+) as a cofactor.

The catalysed reaction is Endonucleolytic cleavage of RNA, removing extra 3' nucleotides from tRNA precursor, generating 3' termini of tRNAs. A 3'-hydroxy group is left at the tRNA terminus and a 5'-phosphoryl group is left at the trailer molecule.. Zinc phosphodiesterase, which displays some tRNA 3'-processing endonuclease activity. Probably involved in tRNA maturation, by removing a 3'-trailer from precursor tRNA. This Streptococcus equi subsp. zooepidemicus (strain H70) protein is Ribonuclease Z.